We begin with the raw amino-acid sequence, 158 residues long: NADH-quinone oxidoreductase subunit B (158 aa).

The [4Fe-4S] cluster site is built by Cys37, Cys38, Cys102, and Cys132.

Belongs to the complex I 20 kDa subunit family. As to quaternary structure, NDH-1 is composed of 14 different subunits. Subunits NuoB, C, D, E, F, and G constitute the peripheral sector of the complex. [4Fe-4S] cluster is required as a cofactor.

It is found in the cell inner membrane. It catalyses the reaction a quinone + NADH + 5 H(+)(in) = a quinol + NAD(+) + 4 H(+)(out). Functionally, NDH-1 shuttles electrons from NADH, via FMN and iron-sulfur (Fe-S) centers, to quinones in the respiratory chain. Couples the redox reaction to proton translocation (for every two electrons transferred, four hydrogen ions are translocated across the cytoplasmic membrane), and thus conserves the redox energy in a proton gradient. The polypeptide is NADH-quinone oxidoreductase subunit B (Bordetella avium (strain 197N)).